Here is a 152-residue protein sequence, read N- to C-terminus: MQIWVDADACPNVIKEVLFRAADRTGMMVTLVANQPLKTPPSKFIRTVQVASGFDVADNEIVQRVEKNDLVITADIPLAAEVIEKGGIALNPRGERYTPDTIRERLNMRDFMDTMRASGIQTGGPNTLNQRDRQQFANELDKWLQQARNQAK.

Belongs to the UPF0178 family.

The chain is UPF0178 protein YPTS_2857 from Yersinia pseudotuberculosis serotype IB (strain PB1/+).